The chain runs to 558 residues: Glucose-6-phosphate isomerase (558 aa).

Alanine 2 bears the N-acetylalanine mark. Residue lysine 12 is modified to N6-acetyllysine. Lysine 34 bears the N6-(2-hydroxyisobutyryl)lysine mark. Serine 107 carries the phosphoserine modification. Threonine 109 is modified (phosphothreonine). N6-acetyllysine is present on lysine 142. 159-160 (GS) is a D-glucose 6-phosphate binding site. Serine 185 carries the phosphoserine; by CK2 modification. 210-215 (SKTFTT) is a binding site for D-glucose 6-phosphate. A Phosphothreonine modification is found at threonine 250. The D-glucose 6-phosphate site is built by glutamine 354, glutamate 358, and histidine 389. Glutamate 358 acts as the Proton donor in catalysis. Histidine 389 is an active-site residue. Position 454 is an N6-acetyllysine; alternate (lysine 454). Lysine 454 is subject to N6-malonyllysine; alternate. Position 454 is an N6-succinyllysine; alternate (lysine 454). Position 455 is a phosphoserine (serine 455). Position 519 (lysine 519) interacts with D-glucose 6-phosphate. Residue lysine 519 is part of the active site.

Belongs to the GPI family. Homodimer in the catalytically active form, monomer in the secreted form. In terms of processing, phosphorylation at Ser-185 by CK2 has been shown to decrease enzymatic activity and may contribute to secretion by a non-classical secretory pathway. ISGylated.

The protein localises to the cytoplasm. The protein resides in the secreted. The catalysed reaction is alpha-D-glucose 6-phosphate = beta-D-fructose 6-phosphate. The protein operates within carbohydrate degradation; glycolysis; D-glyceraldehyde 3-phosphate and glycerone phosphate from D-glucose: step 2/4. Functionally, in the cytoplasm, catalyzes the conversion of glucose-6-phosphate to fructose-6-phosphate, the second step in glycolysis, and the reverse reaction during gluconeogenesis. Besides it's role as a glycolytic enzyme, also acts as a secreted cytokine: acts as an angiogenic factor (AMF) that stimulates endothelial cell motility. Acts as a neurotrophic factor, neuroleukin, for spinal and sensory neurons. It is secreted by lectin-stimulated T-cells and induces immunoglobulin secretion. The chain is Glucose-6-phosphate isomerase from Sus scrofa (Pig).